The sequence spans 244 residues: Monothiol glutaredoxin-4 (244 aa).

The Thioredoxin domain occupies 2 to 106; that stretch reads SVEITFVEQF…LKAAIDEYIQ (105 aa). Positions 147-244 constitute a Glutaredoxin domain; that stretch reads NERLSTLTNA…NGELQEMLPN (98 aa). Glutathione is bound at residue K164. Residue C172 participates in [2Fe-2S] cluster binding. Residues 201–205 and 226–227 contribute to the glutathione site; these read RQGLK and LD.

It belongs to the glutaredoxin family. Monothiol subfamily. As to quaternary structure, homodimer. Interacts with php4.

The protein resides in the cytoplasm. It is found in the nucleus. Its function is as follows. Monothiol glutaredoxin involved in the biogenesis of iron-sulfur clusters. Binds one iron-sulfur cluster per dimer. The iron-sulfur cluster is bound between subunits, and is complexed by a bound glutathione and a cysteine residue from each subunit. The sequence is that of Monothiol glutaredoxin-4 (grx4) from Schizosaccharomyces pombe (strain 972 / ATCC 24843) (Fission yeast).